A 139-amino-acid chain; its full sequence is Trafficking protein particle complex subunit 2-like protein (139 aa).

It belongs to the TRAPP small subunits family. Sedlin subfamily.

It is found in the cytoplasm. Its subcellular location is the perinuclear region. It localises to the endoplasmic reticulum. The protein resides in the golgi apparatus. Its function is as follows. May play a role in vesicular transport from endoplasmic reticulum to Golgi. This Xenopus tropicalis (Western clawed frog) protein is Trafficking protein particle complex subunit 2-like protein (trappc2l).